The chain runs to 279 residues: 3-methyl-2-oxobutanoate hydroxymethyltransferase (279 aa).

Residues D43 and D82 each contribute to the Mg(2+) site. Residues 43 to 44 (DS), D82, and K112 each bind 3-methyl-2-oxobutanoate. E114 contributes to the Mg(2+) binding site. E181 acts as the Proton acceptor in catalysis.

This sequence belongs to the PanB family. In terms of assembly, homodecamer; pentamer of dimers. The cofactor is Mg(2+).

It localises to the cytoplasm. The catalysed reaction is 3-methyl-2-oxobutanoate + (6R)-5,10-methylene-5,6,7,8-tetrahydrofolate + H2O = 2-dehydropantoate + (6S)-5,6,7,8-tetrahydrofolate. It participates in cofactor biosynthesis; (R)-pantothenate biosynthesis; (R)-pantoate from 3-methyl-2-oxobutanoate: step 1/2. Its function is as follows. Catalyzes the reversible reaction in which hydroxymethyl group from 5,10-methylenetetrahydrofolate is transferred onto alpha-ketoisovalerate to form ketopantoate. The protein is 3-methyl-2-oxobutanoate hydroxymethyltransferase of Bacillus anthracis (strain A0248).